The primary structure comprises 196 residues: Phosphoheptose isomerase (196 aa).

An SIS domain is found at 34-196 (MVQCLLGGKK…DRTLFPQDEA (163 aa)). A substrate-binding site is contributed by 49–51 (NGG). Zn(2+) is bound by residues His-58 and Glu-62. Substrate-binding positions include Glu-62, 91-92 (ND), 117-119 (STS), Ser-122, and Gln-172. The Zn(2+) site is built by Gln-172 and His-180.

This sequence belongs to the SIS family. GmhA subfamily. In terms of assembly, homotetramer. It depends on Zn(2+) as a cofactor.

It localises to the cytoplasm. It catalyses the reaction 2 D-sedoheptulose 7-phosphate = D-glycero-alpha-D-manno-heptose 7-phosphate + D-glycero-beta-D-manno-heptose 7-phosphate. It functions in the pathway carbohydrate biosynthesis; D-glycero-D-manno-heptose 7-phosphate biosynthesis; D-glycero-alpha-D-manno-heptose 7-phosphate and D-glycero-beta-D-manno-heptose 7-phosphate from sedoheptulose 7-phosphate: step 1/1. Catalyzes the isomerization of sedoheptulose 7-phosphate in D-glycero-D-manno-heptose 7-phosphate. The protein is Phosphoheptose isomerase of Shewanella denitrificans (strain OS217 / ATCC BAA-1090 / DSM 15013).